The following is an 823-amino-acid chain: ATP-dependent DNA helicase At3g02060, chloroplastic (823 aa).

The N-terminal 53 residues, 1-53 (MMSLLPNPDPITVPLVLKLCSFPPPRRLFSLRLRRFTRKSSSLLPLVAVSSLS), are a transit peptide targeting the chloroplast. In terms of domain architecture, Helicase ATP-binding spans 285 to 447 (LTERETPMDR…LTGFRDASLI (163 aa)). 298–305 (GDVGFGKT) lines the ATP pocket. A DEEQ box motif is present at residues 400 to 403 (DEEQ). The region spanning 465 to 622 (RKEKVIEAIK…GFQLAEKDMG (158 aa)) is the Helicase C-terminal domain.

This sequence belongs to the helicase family.

Its subcellular location is the plastid. It is found in the chloroplast. The enzyme catalyses ATP + H2O = ADP + phosphate + H(+). In Arabidopsis thaliana (Mouse-ear cress), this protein is ATP-dependent DNA helicase At3g02060, chloroplastic.